A 316-amino-acid chain; its full sequence is DNA-directed RNA polymerase III subunit RPC6 (316 aa).

At Ala-2 the chain carries N-acetylalanine. Glycyl lysine isopeptide (Lys-Gly) (interchain with G-Cter in SUMO2) cross-links involve residues Lys-5 and Lys-7. [4Fe-4S] cluster contacts are provided by Cys-287, Cys-290, Cys-296, and Cys-307.

This sequence belongs to the eukaryotic RPC34/RPC39 RNA polymerase subunit family. In terms of assembly, component of the RNA polymerase III complex consisting of 17 subunits: a ten-subunit horseshoe-shaped catalytic core composed of POLR3A/RPC1, POLR3B/RPC2, POLR1C/RPAC1, POLR1D/RPAC2, POLR3K/RPC10, POLR2E/RPABC1, POLR2F/RPABC2, POLR2H/RPABC3, POLR2K/RPABC4 and POLR2L/RPABC5; a mobile stalk composed of two subunits POLR3H/RPC8 and CRCP/RPC9, protruding from the core and functioning primarily in transcription initiation; and additional subunits homologous to general transcription factors of the RNA polymerase II machinery, POLR3C/RPC3-POLR3F/RPC6-POLR3G/RPC7 heterotrimer required for transcription initiation and POLR3D/RPC4-POLR3E/RPC5 heterodimer involved in both transcription initiation and termination. Directly interacts with POLR3C. Interacts with TBP and TFIIIB90 and GTF3C4. Interacts with MAF1. As part of the RNA polymerase III complex, interacts with PKP2.

It is found in the nucleus. DNA-dependent RNA polymerase catalyzes the transcription of DNA into RNA using the four ribonucleoside triphosphates as substrates. Specific peripheric component of RNA polymerase III (Pol III) which synthesizes small non-coding RNAs including 5S rRNA, snRNAs, tRNAs and miRNAs from at least 500 distinct genomic loci. Part of POLR3C/RPC3-POLR3F/RPC6-POLR3G/RPC7 heterotrimer that coordinates the dynamics of Pol III stalk and clamp modules during the transition from apo to elongation state. Pol III plays a key role in sensing and limiting infection by intracellular bacteria and DNA viruses, including varicella zoster virus. Acts as a nuclear and cytosolic DNA sensor detecting AT-rich DNA, involved in innate immune response. Can sense non-self dsDNA that serves as template for transcription into dsRNA. The non-self RNA polymerase III transcripts, such as Epstein-Barr virus-encoded RNAs (EBERs) induce type I interferon and NF-kappa-B through the RIG-I pathway. Preferentially binds double-stranded DNA (dsDNA). This is DNA-directed RNA polymerase III subunit RPC6 from Mus musculus (Mouse).